Reading from the N-terminus, the 565-residue chain is Glycine--tRNA ligase (565 aa).

Positions 98 and 164 each coordinate substrate. ATP is bound by residues 196–198, 206–211, 323–324, and 440–443; these read RNE, IRLREF, EI, and GIDR. 211–215 contributes to the substrate binding site; the sequence is FTQAE. A substrate-binding site is contributed by 436–440; it reads EPSFG.

The protein belongs to the class-II aminoacyl-tRNA synthetase family.

It is found in the cytoplasm. The catalysed reaction is tRNA(Gly) + glycine + ATP = glycyl-tRNA(Gly) + AMP + diphosphate. Its function is as follows. Catalyzes the attachment of glycine to tRNA(Gly). The chain is Glycine--tRNA ligase from Methanothermobacter thermautotrophicus (strain ATCC 29096 / DSM 1053 / JCM 10044 / NBRC 100330 / Delta H) (Methanobacterium thermoautotrophicum).